The primary structure comprises 873 residues: Leucine--tRNA ligase (873 aa).

The 'HIGH' region signature appears at 42-52; the sequence is PYPSGKLHMGH. Positions 624-643 are disordered; it reads PVEIGGTEKMSKSKNNGVDP. Residues 632-636 carry the 'KMSKS' region motif; sequence KMSKS. Lysine 635 lines the ATP pocket.

Belongs to the class-I aminoacyl-tRNA synthetase family.

It is found in the cytoplasm. It catalyses the reaction tRNA(Leu) + L-leucine + ATP = L-leucyl-tRNA(Leu) + AMP + diphosphate. This chain is Leucine--tRNA ligase, found in Pseudomonas paraeruginosa (strain DSM 24068 / PA7) (Pseudomonas aeruginosa (strain PA7)).